A 939-amino-acid polypeptide reads, in one-letter code: MEFKDTLNLPQTEFPMKGNLPNKEPEILSFWEKINLYQKLREDRKGKDKYILHDGPPYANGHIHIGHALNKILKDILVKYQSMKGKDAPFVPGWDCHGLPIEQQVEKELKEKKIKKEDLSKSEFRKLCREYALKFVNIQKEEFKRLGIIGNWEKPYLTMRPSYQAQEVLELGRVFNKGVAYRGKKPVYWCIYDKTAEAEAEIEYYDKKDPSIYVKFKMKDSDDTYLVIWTTTPWTLPANLGVMVHPEFDYVYFKTGKGTLIVAKELLENFKEKTGLNGEVIKQVKGKDLEFKEYYHPFIDRVSKVYLSEFVELGTGTGLVHMAPGHGQEDYIIGQRYGVDAFAPVDDEGRFIQEAPDWLKGIRVFDANDLIIEKLQEVDALIYKEVISHSYPHCWRCKNPVIFRATPQWFISMEAKVNENQTLREAALKEIERVKWIPYYGQNRIKSMVENRPDWCISRQRSWGVPITVFYCENCGEIVKDMEVFEHVANLIKNDEFGADIWFEKLVKELLPEGYKCKKCGGQEFKKEEDILDVWFDSGVSHAAVLKYGEWEELRWPADMYLEGSDQHRGWFQSSLLESVASYNRAPYDTVLTHGFTLDEKGRKMSKSAGNVVAPEKVIKEYGADILRLWVVTEDYTEDIKIGFNLIKRIAEDYRKIRNTFRYFLGNLYDFNPNQDYVPYENLLEIDRWMLSKLQNIIQIADKSYEEGKFHKIYHTIKNFVIVDLSAIYLDILKDRLYVYAPKSLERKSAQTVLWELLLSLNKILAPIISFTAEEVWQYVRKIDSNIKESIHLEIMPVVNEKFIDKNLEETYEKLLEVRDDILKAIEEARKQDLVRHPYEARVILKLPKEYKEIVEKRLDWIKFFFTVSQVELSDNPEGDVVINGESVKDSVIAVSKAKGEKCPRCWIYDESVGRNGQPVCDRCKIQLEIMNIKLEELA.

Positions P57–H67 match the 'HIGH' region motif. E563 provides a ligand contact to L-isoleucyl-5'-AMP. A 'KMSKS' region motif is present at residues K604–S608. K607 contacts ATP. C903, C906, C921, and C924 together coordinate Zn(2+).

Belongs to the class-I aminoacyl-tRNA synthetase family. IleS type 1 subfamily. In terms of assembly, monomer. It depends on Zn(2+) as a cofactor.

It is found in the cytoplasm. The enzyme catalyses tRNA(Ile) + L-isoleucine + ATP = L-isoleucyl-tRNA(Ile) + AMP + diphosphate. Its function is as follows. Catalyzes the attachment of isoleucine to tRNA(Ile). As IleRS can inadvertently accommodate and process structurally similar amino acids such as valine, to avoid such errors it has two additional distinct tRNA(Ile)-dependent editing activities. One activity is designated as 'pretransfer' editing and involves the hydrolysis of activated Val-AMP. The other activity is designated 'posttransfer' editing and involves deacylation of mischarged Val-tRNA(Ile). The sequence is that of Isoleucine--tRNA ligase from Sulfurihydrogenibium sp. (strain YO3AOP1).